The primary structure comprises 523 residues: Pentatricopeptide repeat-containing protein At1g64580 (523 aa).

13 PPR repeats span residues 43–77 (HHHHYRERLRNELHCIKFDDAFSLFCEMLQSRPIP), 78–112 (SIVDFTRVLTVIAKMNKFDIVIYLYHKMENLGISH), 113–147 (DLYSFTILIHCFCRCSRLSLALALLGKMMKLGFRP), 148–182 (SIVTLGSLLNGFCQGNRFQEAVSLVDSMDGFGFVP), 183–217 (NVVIYNTVINGLCKNRDLNNALEVFYCMEKKGIRA), 218–252 (DAVTYNTLISGLSNSGRWTDAARLLRDMVKRKIDP), 253–287 (NVIFFTALIDTFVKEGNLLEARNLYKEMIRRSVVP), 288–322 (NVFTYNSLINGFCIHGCLGDAKYMFDLMVSKGCFP), 323–357 (DVVTYNTLITGFCKSKRVEDGMKLFCEMTYQGLVG), 358–392 (DAFTYNTLIHGYCQAGKLNVAQKVFNRMVDCGVSP), 393–427 (DIVTYNILLDCLCNNGKIEKALVMVEDLQKSEMDV), 428–462 (DIITYNIIIQGLCRTDKLKEAWCLFRSLTRKGVKP), and 463–497 (DAIAYITMISGLCRKGLQREADKLCRRMKEDGFMP).

This sequence belongs to the PPR family. P subfamily.

The sequence is that of Pentatricopeptide repeat-containing protein At1g64580 from Arabidopsis thaliana (Mouse-ear cress).